We begin with the raw amino-acid sequence, 310 residues long: Probable manganese-dependent inorganic pyrophosphatase (310 aa).

Positions 9, 13, 15, 75, 97, and 149 each coordinate Mn(2+).

This sequence belongs to the PPase class C family. It depends on Mn(2+) as a cofactor.

The protein localises to the cytoplasm. The enzyme catalyses diphosphate + H2O = 2 phosphate + H(+). The sequence is that of Probable manganese-dependent inorganic pyrophosphatase from Bacillus cytotoxicus (strain DSM 22905 / CIP 110041 / 391-98 / NVH 391-98).